A 187-amino-acid polypeptide reads, in one-letter code: Avirulence protein ATR39-2 (187 aa).

The N-terminal stretch at 1 to 20 (MVKCTPLLALTVIVSAGSDA) is a signal peptide. The RxLR-dEER signature appears at 49-66 (RVLRASDVPNEVAAGESR).

The protein belongs to the RxLR effector family.

The protein resides in the secreted. Its subcellular location is the host cell. Functionally, secreted effector that acts as an elicitor of hypersensitive response (HR) specifically on plants carrying defense protein RPP39. The allele ATR39-1 is recognized by RPP39, whereas the ATR39-2 allele is nor recognized. The polypeptide is Avirulence protein ATR39-2 (Hyaloperonospora arabidopsidis (strain Emoy2) (Downy mildew agent)).